The following is a 591-amino-acid chain: Tricyclene synthase, chloroplastic (591 aa).

A chloroplast-targeting transit peptide spans 1–45 (MATLLQIGSGVIYSNALRKTLRRPQSSTCIIVTETTPCNKSPTVQ). Positions 302, 339, 343, 481, and 484 each coordinate (2E)-geranyl diphosphate. The Mg(2+) site is built by aspartate 339 and aspartate 343. The short motif at 339 to 343 (DDIYD) is the DDXXD motif element. Mg(2+) contacts are provided by asparagine 484, threonine 488, and glutamate 492.

This sequence belongs to the terpene synthase family. Tpsb subfamily. The cofactor is Mg(2+). Mn(2+) is required as a cofactor. In terms of tissue distribution, predominantly expressed in flowers but also in leaves, siliques and in stems.

It localises to the plastid. The protein localises to the chloroplast stroma. The catalysed reaction is (2E)-geranyl diphosphate = beta-myrcene + diphosphate. It carries out the reaction (2E)-geranyl diphosphate = tricyclene + diphosphate. The enzyme catalyses (2E)-geranyl diphosphate = (E)-beta-ocimene + diphosphate. Its pathway is secondary metabolite biosynthesis; terpenoid biosynthesis. Functionally, involved in monoterpene (C10) biosynthesis. The major product is beta-myrcene (56%) followed by (E)-beta-ocimene (20%) and minor amounts (less than 5%) of the cyclic monoterpene (-)-limonene, (+)-limonene, 2-carene and tricyclene. The polypeptide is Tricyclene synthase, chloroplastic (Arabidopsis thaliana (Mouse-ear cress)).